We begin with the raw amino-acid sequence, 43 residues long: Snaclec lebecetin subunit beta (43 aa).

One can recognise a C-type lectin domain in the interval Ala-1–Val-43. Cysteines 4 and 16 form a disulfide.

As to quaternary structure, heterodimer of subunits alpha and beta; disulfide-linked. Requires Ca(2+) as cofactor. In terms of processing, glycosylated. Expressed by the venom gland.

It localises to the secreted. Binds to the platelet GPIb/IX/V receptor system and inhibits ristocetin-induced platelet aggregation in human platelet-rich plasma. Strongly inhibits platelet aggregation induced by ADP, calcium ionophore, thrombin and collagen. Does not inhibit U46619-induced platelet aggregation. This chain is Snaclec lebecetin subunit beta, found in Macrovipera lebetinus (Levantine viper).